The sequence spans 117 residues: UPF0342 protein OB1136 (117 aa).

It belongs to the UPF0342 family.

This chain is UPF0342 protein OB1136, found in Oceanobacillus iheyensis (strain DSM 14371 / CIP 107618 / JCM 11309 / KCTC 3954 / HTE831).